The sequence spans 507 residues: Glycerol kinase 1 (507 aa).

Thr12 serves as a coordination point for ADP. Positions 12, 13, and 14 each coordinate ATP. Thr12 is a sn-glycerol 3-phosphate binding site. Arg16 serves as a coordination point for ADP. Residues Arg82, Glu83, Tyr134, and Asp249 each coordinate sn-glycerol 3-phosphate. The glycerol site is built by Arg82, Glu83, Tyr134, Asp249, and Gln250. Residues Thr271 and Gly315 each contribute to the ADP site. ATP contacts are provided by Thr271, Gly315, Gln319, and Gly416. ADP-binding residues include Gly416 and Asn420.

The protein belongs to the FGGY kinase family.

The enzyme catalyses glycerol + ATP = sn-glycerol 3-phosphate + ADP + H(+). It participates in polyol metabolism; glycerol degradation via glycerol kinase pathway; sn-glycerol 3-phosphate from glycerol: step 1/1. Its activity is regulated as follows. Inhibited by fructose 1,6-bisphosphate (FBP). Functionally, key enzyme in the regulation of glycerol uptake and metabolism. Catalyzes the phosphorylation of glycerol to yield sn-glycerol 3-phosphate. This is Glycerol kinase 1 from Streptomyces coelicolor (strain ATCC BAA-471 / A3(2) / M145).